Consider the following 337-residue polypeptide: Phosphate acyltransferase (337 aa).

Belongs to the PlsX family. In terms of assembly, homodimer. Probably interacts with PlsY.

The protein resides in the cytoplasm. It carries out the reaction a fatty acyl-[ACP] + phosphate = an acyl phosphate + holo-[ACP]. Its pathway is lipid metabolism; phospholipid metabolism. Its function is as follows. Catalyzes the reversible formation of acyl-phosphate (acyl-PO(4)) from acyl-[acyl-carrier-protein] (acyl-ACP). This enzyme utilizes acyl-ACP as fatty acyl donor, but not acyl-CoA. The chain is Phosphate acyltransferase from Acidobacterium capsulatum (strain ATCC 51196 / DSM 11244 / BCRC 80197 / JCM 7670 / NBRC 15755 / NCIMB 13165 / 161).